The chain runs to 772 residues: Protein U58 (772 aa).

This sequence belongs to the herpesviridae UL87 family.

The protein is Protein U58 (U58) of Homo sapiens (Human).